Reading from the N-terminus, the 206-residue chain is FMN-dependent NADH:quinone oxidoreductase 4 (206 aa).

FMN-binding positions include Ser-10 and 136 to 139 (SSGG).

It belongs to the azoreductase type 1 family. As to quaternary structure, homodimer. It depends on FMN as a cofactor.

The enzyme catalyses 2 a quinone + NADH + H(+) = 2 a 1,4-benzosemiquinone + NAD(+). It catalyses the reaction N,N-dimethyl-1,4-phenylenediamine + anthranilate + 2 NAD(+) = 2-(4-dimethylaminophenyl)diazenylbenzoate + 2 NADH + 2 H(+). In terms of biological role, quinone reductase that provides resistance to thiol-specific stress caused by electrophilic quinones. Functionally, also exhibits azoreductase activity. Catalyzes the reductive cleavage of the azo bond in aromatic azo compounds to the corresponding amines. The polypeptide is FMN-dependent NADH:quinone oxidoreductase 4 (Pseudomonas fluorescens (strain ATCC BAA-477 / NRRL B-23932 / Pf-5)).